The chain runs to 151 residues: Large ribosomal subunit protein uL15 (151 aa).

The interval 1–57 (MTLRLDSLKANKGARRRKLRKGRGIAAGQGASCGFGMRGQKSRSGRPTRPGFEGGQM) is disordered. The segment covering 12–23 (KGARRRKLRKGR) has biased composition (basic residues). Residues 25 to 37 (IAAGQGASCGFGM) show a composition bias toward gly residues.

This sequence belongs to the universal ribosomal protein uL15 family. As to quaternary structure, part of the 50S ribosomal subunit.

Functionally, binds to the 23S rRNA. This chain is Large ribosomal subunit protein uL15, found in Synechococcus sp. (strain CC9902).